Consider the following 155-residue polypeptide: Interleukin-2 (155 aa).

An N-terminal signal peptide occupies residues Met1 to Ser20. A glycan (O-linked (GalNAc...) threonine) is linked at Thr24. Residues Cys79 and Cys127 are joined by a disulfide bond. Asn112 carries N-linked (GlcNAc...) asparagine glycosylation.

It belongs to the IL-2 family.

Its subcellular location is the secreted. Cytokine produced by activated CD4-positive helper T-cells and to a lesser extend activated CD8-positive T-cells and natural killer (NK) cells that plays pivotal roles in the immune response and tolerance. Binds to a receptor complex composed of either the high-affinity trimeric IL-2R (IL2RA/CD25, IL2RB/CD122 and IL2RG/CD132) or the low-affinity dimeric IL-2R (IL2RB and IL2RG). Interaction with the receptor leads to oligomerization and conformation changes in the IL-2R subunits resulting in downstream signaling starting with phosphorylation of JAK1 and JAK3. In turn, JAK1 and JAK3 phosphorylate the receptor to form a docking site leading to the phosphorylation of several substrates including STAT5. This process leads to activation of several pathways including STAT, phosphoinositide-3-kinase/PI3K and mitogen-activated protein kinase/MAPK pathways. Functions as a T-cell growth factor and can increase NK-cell cytolytic activity as well. Promotes strong proliferation of activated B-cells and subsequently immunoglobulin production. Plays a pivotal role in regulating the adaptive immune system by controlling the survival and proliferation of regulatory T-cells, which are required for the maintenance of immune tolerance. Moreover, participates in the differentiation and homeostasis of effector T-cell subsets, including Th1, Th2, Th17 as well as memory CD8-positive T-cells. The chain is Interleukin-2 (IL2) from Canis lupus familiaris (Dog).